Here is a 259-residue protein sequence, read N- to C-terminus: Hemin import ATP-binding protein HmuV (259 aa).

An ABC transporter domain is found at 2–238 (IEARDLNVSI…ALLSEVFDCQ (237 aa)). 34–41 (GPNGSGKS) is a binding site for ATP.

Belongs to the ABC transporter superfamily. Heme (hemin) importer (TC 3.A.1.14.5) family. The complex is composed of two ATP-binding proteins (HmuV), two transmembrane proteins (HmuU) and a solute-binding protein (HmuT).

It localises to the cell inner membrane. Its function is as follows. Part of the ABC transporter complex HmuTUV involved in hemin import. Responsible for energy coupling to the transport system. The protein is Hemin import ATP-binding protein HmuV of Chelativorans sp. (strain BNC1).